The sequence spans 209 residues: Hyperpolarization-activated voltage-gated potassium channel (209 aa).

The Cytoplasmic portion of the chain corresponds to 1–10 (MNLKDRRLKK). Residues 11–31 (IMEVLSLIFTFEIVASFILST) traverse the membrane as a helical segment. The Extracellular segment spans residues 32 to 38 (YNPPYQD). Residues 39 to 59 (LLIKLDYISIMFFTFEFIYNF) form a helical membrane-spanning segment. At 60-71 (YYVEDKAKFFKD) the chain is on the cytoplasmic side. Residues 72-92 (IYNIVDAIVVIAFLLYSLQVF) traverse the membrane as a helical segment. Residues 93–96 (YSKA) are Extracellular-facing. A helical; Voltage-sensor transmembrane segment spans residues 97–117 (FLGLRVINLLRILVLLRIIKL). Residues 118-125 (RKLEENQA) are Cytoplasmic-facing. Residues 126–146 (LINFLTLLTICFIASCLIWIV) traverse the membrane as a helical segment. At 147 to 181 (ESGVNPAINNFFDAFYFTTISITTVGYGDITPKTD) the chain is on the extracellular side. The Selectivity filter motif lies at 170-175 (TVGYGD). The chain crosses the membrane as a helical span at residues 182-202 (AGKLIIIFSVLFFISGLITSL). The Cytoplasmic portion of the chain corresponds to 203–209 (QKALKGD).

The protein belongs to the potassium channel family. In terms of assembly, homotetramer.

The protein resides in the cell membrane. Its function is as follows. Voltage-gated potassium-selective channel opened by hyperpolarization. The chain is Hyperpolarization-activated voltage-gated potassium channel (mvp) from Methanocaldococcus jannaschii (strain ATCC 43067 / DSM 2661 / JAL-1 / JCM 10045 / NBRC 100440) (Methanococcus jannaschii).